The following is a 122-amino-acid chain: Large ribosomal subunit protein uL22 (122 aa).

Belongs to the universal ribosomal protein uL22 family. Part of the 50S ribosomal subunit.

Its function is as follows. This protein binds specifically to 23S rRNA; its binding is stimulated by other ribosomal proteins, e.g. L4, L17, and L20. It is important during the early stages of 50S assembly. It makes multiple contacts with different domains of the 23S rRNA in the assembled 50S subunit and ribosome. Functionally, the globular domain of the protein is located near the polypeptide exit tunnel on the outside of the subunit, while an extended beta-hairpin is found that lines the wall of the exit tunnel in the center of the 70S ribosome. The polypeptide is Large ribosomal subunit protein uL22 (Prochlorococcus marinus (strain MIT 9303)).